We begin with the raw amino-acid sequence, 361 residues long: Pyruvate dehydrogenase E1 component subunit beta, mitochondrial (361 aa).

A mitochondrion-targeting transit peptide spans 1–27; that stretch reads MAVNGCMRLLRNGLTSACALEQSVRRL. Glu90 lines the thiamine diphosphate pocket. Ile143, Ala191, Val192, Asp194, and Asn196 together coordinate K(+).

Heterotetramer of two PDHA1 and two PDHB subunits. The heterotetramer interacts with DLAT, and is part of the multimeric pyruvate dehydrogenase complex that contains multiple copies of pyruvate dehydrogenase (E1), dihydrolipoamide acetyltransferase (DLAT, E2) and lipoamide dehydrogenase (DLD, E3). The cofactor is thiamine diphosphate.

Its subcellular location is the mitochondrion matrix. The enzyme catalyses N(6)-[(R)-lipoyl]-L-lysyl-[protein] + pyruvate + H(+) = N(6)-[(R)-S(8)-acetyldihydrolipoyl]-L-lysyl-[protein] + CO2. The pyruvate dehydrogenase complex catalyzes the overall conversion of pyruvate to acetyl-CoA and CO(2), and thereby links the glycolytic pathway to the tricarboxylic cycle. This chain is Pyruvate dehydrogenase E1 component subunit beta, mitochondrial, found in Ascaris suum (Pig roundworm).